A 438-amino-acid polypeptide reads, in one-letter code: Polycomb protein eed-B (438 aa).

Positions 1–70 (MSEASGRAAG…GRKGWGKGKW (70 aa)) are disordered. Polar residues predominate over residues 40-57 (SIESGTNTERPDTPTNAA). 7 WD repeats span residues 88-131 (DHNQ…DIRL), 139-182 (DADE…CIKH), 185-225 (GHGN…LVAI), 231-270 (GHRD…MKTA), 301-338 (IHRN…DDIE), 356-396 (SQCD…PHKA), and 405-438 (KCAS…DRLR).

The protein belongs to the WD repeat ESC family. Component of the prc2/eed-ezh2 complex. Can interact with ezh2, hdac1 and taf9. Interacts with yy1.

It localises to the nucleus. Its function is as follows. Polycomb group (PcG) protein. Component of the prc2/eed-ezh2 complex, which methylates 'Lys-9' and 'Lys-27' of histone H3, leading to transcriptional repression of the affected target gene. May play a role in neural induction. The chain is Polycomb protein eed-B (eed-b) from Xenopus laevis (African clawed frog).